Here is a 203-residue protein sequence, read N- to C-terminus: RNA annealing protein YRA2 (203 aa).

Met-1 carries the N-acetylmethionine modification. 2 disordered regions span residues 1–60 (MDKA…REEP) and 137–203 (QPQR…YMKG). The segment covering 11 to 20 (NSHTDSSSNH) has biased composition (polar residues). The segment covering 47-60 (SRSKDRLYREREEP) has biased composition (basic and acidic residues). Residues 64-138 (KRIRISKIPL…AKIEVEIYQP (75 aa)) enclose the RRM domain. Composition is skewed to basic residues over residues 139 to 153 (QRKHSRMNAHNRRKQ) and 161 to 180 (GRPGSHYRQKPNRVSKKNKG).

This sequence belongs to the YRA1 family. Associates with mRNPs. Interacts with YRA1.

Its subcellular location is the nucleus. Involved in export of poly(A) mRNAs from the nucleus. Recruited to the coding sequences as well as poly-A sites of active genes. This chain is RNA annealing protein YRA2 (YRA2), found in Saccharomyces cerevisiae (strain JAY291) (Baker's yeast).